The sequence spans 78 residues: Putative DPH3 homolog B (78 aa).

Residues 4–60 (FHDEVEIEDFQYDEDSETYFCPCPCGDNFSITKEELENGEGVAMCPGCSLIIKVIYD) enclose the DPH-type MB domain. Residues cysteine 26, cysteine 28, cysteine 48, and cysteine 51 each contribute to the Zn(2+) site.

Belongs to the DPH3 family.

The protein is Putative DPH3 homolog B (DPH3P1) of Homo sapiens (Human).